The sequence spans 229 residues: UPF0173 metal-dependent hydrolase SH1218 (229 aa).

This sequence belongs to the UPF0173 family.

The sequence is that of UPF0173 metal-dependent hydrolase SH1218 from Staphylococcus haemolyticus (strain JCSC1435).